The following is a 697-amino-acid chain: Elongation factor G 2 (697 aa).

Residues 5–280 form the tr-type G domain; the sequence is SLYRNIGIFA…AVVDYLPSPT (276 aa). GTP-binding positions include 14-21, 78-82, and 132-135; these read AHVDAGKT, DTPGH, and NKLD.

It belongs to the TRAFAC class translation factor GTPase superfamily. Classic translation factor GTPase family. EF-G/EF-2 subfamily.

The protein localises to the cytoplasm. Functionally, catalyzes the GTP-dependent ribosomal translocation step during translation elongation. During this step, the ribosome changes from the pre-translocational (PRE) to the post-translocational (POST) state as the newly formed A-site-bound peptidyl-tRNA and P-site-bound deacylated tRNA move to the P and E sites, respectively. Catalyzes the coordinated movement of the two tRNA molecules, the mRNA and conformational changes in the ribosome. In Saccharophagus degradans (strain 2-40 / ATCC 43961 / DSM 17024), this protein is Elongation factor G 2.